The following is a 512-amino-acid chain: Plastidal glycolate/glycerate translocator 1, chloroplastic (512 aa).

The transit peptide at 1–76 directs the protein to the chloroplast; sequence MATLLATPIF…MNFERKLSVQ (76 aa). Residue Ala77 is modified to N-acetylalanine. 12 consecutive transmembrane segments (helical) span residues 93-113, 127-147, 160-180, 195-215, 238-258, 270-290, 293-313, 336-356, 367-387, 398-418, 425-445, and 480-500; these read VIAI…DYFL, ALFG…VVPA, FLFI…VLPL, YIVA…AIAV, LELW…LFYP, PFLL…PSSI, VFHP…AFGY, AGDI…FSMF, AEIF…TALV, TVSI…VSLF, LTAA…QVVL, and LPFC…LCSV.

The protein belongs to the CidB/LrgB family. As to expression, expressed in leaves, stems and flowers, but not in roots.

The protein resides in the plastid. Its subcellular location is the chloroplast membrane. Glycolate/glycerate transporter required for photorespiration. The sequence is that of Plastidal glycolate/glycerate translocator 1, chloroplastic (PLGG1) from Arabidopsis thaliana (Mouse-ear cress).